Here is a 250-residue protein sequence, read N- to C-terminus: 3-deoxy-manno-octulosonate cytidylyltransferase (250 aa).

The protein belongs to the KdsB family.

It is found in the cytoplasm. It carries out the reaction 3-deoxy-alpha-D-manno-oct-2-ulosonate + CTP = CMP-3-deoxy-beta-D-manno-octulosonate + diphosphate. Its pathway is nucleotide-sugar biosynthesis; CMP-3-deoxy-D-manno-octulosonate biosynthesis; CMP-3-deoxy-D-manno-octulosonate from 3-deoxy-D-manno-octulosonate and CTP: step 1/1. The protein operates within bacterial outer membrane biogenesis; lipopolysaccharide biosynthesis. Activates KDO (a required 8-carbon sugar) for incorporation into bacterial lipopolysaccharide in Gram-negative bacteria. This Francisella tularensis subsp. novicida (strain U112) protein is 3-deoxy-manno-octulosonate cytidylyltransferase.